Here is an 8799-residue protein sequence, read N- to C-terminus: Nesprin-1 (8799 aa).

Residues 1–289 (MATSRASSRS…TQYPDIHGAG (289 aa)) are actin-binding. The Cytoplasmic portion of the chain corresponds to 1–8748 (MATSRASSRS…GRAFLFRILR (8748 aa)). Calponin-homology (CH) domains follow at residues 27 to 134 (IVQK…LYFQ) and 178 to 283 (GNAK…TQYP). Spectrin repeat units follow at residues 314-397 (RDDR…SRLF), 398-502 (DWHI…HLMK), 503-609 (MEFL…SMLE), 610-703 (EVIS…YARA), 704-815 (DEMD…QLTV), 816-923 (PLEE…KHVE), 924-1024 (ANSR…HLKI), 1025-1122 (AVEK…LVDD), 1123-1246 (PDKW…SSLE), 1247-1333 (GLIS…ERRI), 1334-1442 (QVSL…MEMV), 1443-1548 (KSKW…ILGH), 1549-1651 (LSQQ…LEDL), 1652-1761 (LARW…LQSV), 1762-1877 (LAEH…SHAC), 1878-1974 (MSTL…ADAL), 1975-2079 (VALK…QGQC), 2080-2193 (CGLI…LRVS), 2194-2301 (LSIW…KDFT), 2302-2399 (AQRT…QTQA), 2400-2511 (RIQD…LQDC), 2512-2617 (VSEL…LRSC), 2618-2729 (QLAL…LESV), 2730-2836 (IDQW…VEDL), 2837-2960 (VKDH…FGQV), 2961-3060 (TQLE…QNKE), 3061-3169 (QILQ…LENL), 3170-3273 (KIQM…VSRL), 3274-3385 (DRII…LEGA), 3386-3488 (LSKW…LEKL), 3489-3591 (VRLH…RMQL), 3592-3718 (NNVV…YSDW), 3719-3812 (YGST…LEKG), 3813-3918 (LHLA…LEAK), 3919-4026 (VKDH…QRVY), 4027-4137 (RSLE…KSLK), 4138-4233 (AELW…REQD), 4234-4337 (LQRT…IQVS), 4338-4449 (VTNL…LNKA), 4450-4558 (LSEK…LEKS), 4559-4667 (LVSR…TQEA), 4668-4774 (ILAR…LEDT), 4775-4880 (TSVY…CESR), 4881-4989 (MVQS…LTEI), 4990-5097 (YSRC…LQRC), 5098-5207 (MVQW…LEDA), 5208-5316 (VDEW…GKLV), 5317-5422 (KQEL…EEGK), 5423-5520 (AMSQ…LSKL), 5521-5628 (NQAL…LQDA), 5629-5745 (AKDM…PKEA), and 5746-5851 (VVQY…PSAH). A coiled-coil region spans residues 314-8666 (RDDRLILKET…DLEKLLDMSS (8353 aa)). K377 bears the Phosphoserine mark. The residue at position 732 (S732) is a Phosphoserine. Residues 1288 to 1310 (KKRDLQEQMEQAQQGGQAGPGQE) form a disordered region. Residue T2268 is modified to Phosphothreonine. The residue at position 5655 (S5655) is a Phosphoserine. A disordered region spans residues 5868–5894 (PVTEESGEEGTNSEISSPPACRSPSPV). Spectrin repeat units follow at residues 5971–6080 (LERQ…LEEK), 6081–6187 (LSDQ…SLGE), 6377–6488 (RQSI…RLQQ), 6489–6584 (ILRF…RSSL), 6585–6694 (HQNL…LEMW), 6695–6798 (SHLD…TILK), 6799–6905 (HWTR…QEKL), 6906–7023 (HQLQ…LEGL), 7024–7131 (LESW…LTSA), 7132–7240 (LGQW…SKAL), 7241–7353 (LQLW…LQAG), 7354–7457 (VVDY…LQSF), 7458–7561 (LLQH…RGII), 7562–7674 (DSQI…LAFL), 7675–7786 (LKDW…NEWA), 7787–7886 (VFSE…LKET), 7887–8000 (LVAV…IEET), 8001–8109 (WRLW…LKHF), and 8110–8221 (ISQR…VRLP). Phosphoserine is present on residues D8225 and S8227. A disordered region spans residues 8237–8287 (TALSDLRWQDPSADGMPSPQPSSNPSLSLPQPLRSERSGRDTPASVDSIPL). Low complexity predominate over residues 8257–8269 (PSSNPSLSLPQPL). T8278 carries the phosphothreonine modification. S8281, S8284, and S8308 each carry phosphoserine. Spectrin repeat units lie at residues 8332–8440 (SSLE…MKQN), 8441–8550 (LQKW…LQDA), and 8551–8668 (LMQC…SSSQ). T8363 carries the post-translational modification Phosphothreonine. Residues 8673 to 8735 (SWSSADELDT…SDSSRSDPRP (63 aa)) are disordered. Composition is skewed to polar residues over residues 8682–8698 (TSGSVSPTSGRSTPNRQ) and 8706–8718 (SLSQPGPSVSSPK). Basic and acidic residues predominate over residues 8721-8735 (STRDGSDSSRSDPRP). Residues 8740 to 8799 (RAFLFRILRAALPFQLLLLLLIGLTCLVPMSEKDYSCALSNNFARSFHPMLRYTNGPPPL) enclose the KASH domain. The chain crosses the membrane as a helical; Anchor for type IV membrane protein span at residues 8749-8769 (AALPFQLLLLLLIGLTCLVPM). Topologically, residues 8770 to 8799 (SEKDYSCALSNNFARSFHPMLRYTNGPPPL) are perinuclear space.

Belongs to the nesprin family. Core component of LINC complexes which are composed of inner nuclear membrane SUN domain-containing proteins coupled to outer nuclear membrane KASH domain-containing nesprins. SUN and KASH domain-containing proteins seem to bind each other promiscuously; however, differentially expression of LINC complex constituents can give rise to specific assemblies. At least SUN1/2-containing core LINC complexes are proposed to be hexameric composed of three protomers of each KASH and SUN domain-containing protein. The SUN2:SYNE1/KASH1 LINC complex is a heterohexamer; the homotrimeric cloverleave-like conformation of the SUN domain is a prerequisite for LINC complex formation in which three separate SYNE1/KASH1 peptides bind at the interface of adjacent SUN domains. Self-associates. Interacts with SYNE3. Interacts with SUN3; proposed to form a spermatogenesis-specific LINC complex with SUN3 during sperm head formation. May interact with MUSK. Interacts with SPAG4/SUN4. Interacts with EMD and LMNA in vitro. Interacts with F-actin via its N-terminal domain. Interacts with DCTN1 and DYNC1I1/2; suggesting the association with the dynein-dynactin motor complex. Interacts (via KASH domain) with TMEM258. The disulfid bond with SUN1 or SUN2 is required for stability of the respective LINC complex under tensile forces. Expressed in C2F3 and CH310T1/2 cells, brain and skeletal muscle (at protein level).

The protein localises to the nucleus outer membrane. Its subcellular location is the nucleus. It is found in the nucleus envelope. It localises to the cytoplasm. The protein resides in the cytoskeleton. The protein localises to the myofibril. Its subcellular location is the sarcomere. Its function is as follows. Multi-isomeric modular protein which forms a linking network between organelles and the actin cytoskeleton to maintain the subcellular spatial organization. As a component of the LINC (LInker of Nucleoskeleton and Cytoskeleton) complex involved in the connection between the nuclear lamina and the cytoskeleton. The nucleocytoplasmic interactions established by the LINC complex play an important role in the transmission of mechanical forces across the nuclear envelope and in nuclear movement and positioning. May be involved in nucleus-centrosome attachment. During interkinetic nuclear migration (INM) at G2 phase and nuclear migration in neural progenitors its LINC complex association with SUN1/2 and probably association with cytoplasmic dynein-dynactin motor complexes functions to pull the nucleus toward the centrosome; SYNE1 and SYNE2 seem to act redundantly in cerebellum, midbrain, brain stem, and other brain regions except cerebral cortex and hippocampus. Required for centrosome migration to the apical cell surface during early ciliogenesis. May be involved in nuclear remodeling during sperm head formation in spermatogenesis; a probable SUN3:SYNE1/KASH1 LINC complex may tether spermatid nuclei to posterior cytoskeletal structures such as the manchette. The chain is Nesprin-1 from Mus musculus (Mouse).